The primary structure comprises 449 residues: Immunoglobulin gamma-1 heavy chain (449 aa).

The residue at position 1 (glutamine 1) is a Pyrrolidone carboxylic acid. 4 consecutive Ig-like domains span residues 1–96 (QVQL…VYYC), 125–218 (PSVF…KKVE), 240–339 (PSVF…KTIS), and 348–444 (PQVY…KSLS). The segment at 1-119 (QVQLVQSGGG…GQGTLVTVSS (119 aa)) is variable (V) domain, involved in antigen recognition. Cystine bridges form between cysteine 22–cysteine 96, cysteine 146–cysteine 202, cysteine 263–cysteine 323, and cysteine 369–cysteine 427. An N-linked (GlcNAc...) asparagine glycan is attached at asparagine 73. The interval 120–449 (ASTKGPSVFP…QKSLSLSPGK (330 aa)) is constant (C) domain. N-linked (GlcNAc...) (complex) asparagine glycosylation occurs at asparagine 299.

In terms of assembly, immunoglobulins are composed of two identical heavy chains and two identical light chains; disulfide-linked.

The protein localises to the secreted. It is found in the cell membrane. In terms of biological role, immunoglobulins, also known as antibodies, are membrane-bound or secreted glycoproteins produced by B lymphocytes. In the recognition phase of humoral immunity, the membrane-bound immunoglobulins serve as receptors which, upon binding of a specific antigen, trigger the clonal expansion and differentiation of B lymphocytes into immunoglobulins-secreting plasma cells. Secreted immunoglobulins mediate the effector phase of humoral immunity, which results in the elimination of bound antigens. The antigen binding site is formed by the variable domain of one heavy chain, together with that of its associated light chain. Thus, each immunoglobulin has two antigen binding sites with remarkable affinity for a particular antigen. The variable domains are assembled by a process called V-(D)-J rearrangement and can then be subjected to somatic hypermutations which, after exposure to antigen and selection, allow affinity maturation for a particular antigen. The polypeptide is Immunoglobulin gamma-1 heavy chain (Homo sapiens (Human)).